The chain runs to 102 residues: Thioredoxin (102 aa).

The Thioredoxin domain maps to 1–102; that stretch reads MVKVVSAENF…SLIRLINQHS (102 aa). A disulfide bond links cysteine 28 and cysteine 31.

It belongs to the thioredoxin family.

Functionally, participates in various redox reactions through the reversible oxidation of its active center dithiol to a disulfide and catalyzes dithiol-disulfide exchange reactions. In Chlamydia caviae (strain ATCC VR-813 / DSM 19441 / 03DC25 / GPIC) (Chlamydophila caviae), this protein is Thioredoxin (trxA).